A 272-amino-acid chain; its full sequence is uncharacterized protein (272 aa).

The first 20 residues, 1–20 (MMEPKSIFLLGLLLFRVGKL), serve as a signal peptide directing secretion.

This is an uncharacterized protein from Caenorhabditis elegans.